A 180-amino-acid polypeptide reads, in one-letter code: Insulin-like growth factor 2 (180 aa).

An N-terminal signal peptide occupies residues methionine 1–alanine 24. Positions alanine 25–phenylalanine 52 are b. 3 disulfide bridges follow: cysteine 33–cysteine 71, cysteine 45–cysteine 84, and cysteine 70–cysteine 75. The segment at serine 53–arginine 64 is c. Residues glycine 65–alanine 85 form an a region. The segment at threonine 86–glutamate 91 is d. Positions arginine 92–glutamine 180 are cleaved as a propeptide — e peptide. The interval proline 157–glutamine 180 is disordered.

This sequence belongs to the insulin family. Interacts with MYORG; this interaction is required for IGF2 secretion. Interacts with integrins ITGAV:ITGB3 and ITGA6:ITGB4; integrin-binding is required for IGF2 signaling. Interacts with IGFBP2. Proteolytically processed by PCSK4, proIGF2 is cleaved at Arg-128 and Arg-92 to generate big-IGF2 and mature IGF2. As to expression, expressed in the heart, blood serum, kidney and skeletal muscle including the tibialis anterior muscle.

The protein resides in the secreted. Its function is as follows. The insulin-like growth factors possess growth-promoting activity. Major fetal growth hormone in mammals. Plays a key role in regulating fetoplacental development. IGF2 is influenced by placental lactogen. Also involved in tissue differentiation. In adults, involved in glucose metabolism in adipose tissue, skeletal muscle and liver. Acts as a ligand for integrin which is required for IGF2 signaling. Positively regulates myogenic transcription factor MYOD1 function by facilitating the recruitment of transcriptional coactivators, thereby controlling muscle terminal differentiation. Inhibits myoblast differentiation and modulates metabolism via increasing the mitochondrial respiration rate. Functionally, preptin undergoes glucose-mediated co-secretion with insulin, and acts as a physiological amplifier of glucose-mediated insulin secretion. Exhibits osteogenic properties by increasing osteoblast mitogenic activity through phosphoactivation of MAPK1 and MAPK3. This Mus musculus (Mouse) protein is Insulin-like growth factor 2.